Reading from the N-terminus, the 326-residue chain is Ribosome biogenesis protein BRX1 homolog (326 aa).

Positions 1–17 (MVKPSKILEKIKKRTEP) are enriched in basic and acidic residues. The interval 1–66 (MVKPSKILEK…EENKNIEENK (66 aa)) is disordered. The span at 22-57 (VVEEESDEEIIEQEGSEEEEEIVEEESEEEEEEVEE) shows a compositional bias: acidic residues. A Brix domain is found at 75–268 (KRVLFTSTRG…IDKIFSDGFG (194 aa)).

It belongs to the BRX1 family.

Its subcellular location is the nucleus. The protein resides in the nucleolus. Functionally, required for biogenesis of the 60S ribosomal subunit. This is Ribosome biogenesis protein BRX1 homolog (bxdc2) from Dictyostelium discoideum (Social amoeba).